The following is a 128-amino-acid chain: Glycine cleavage system H protein (128 aa).

The region spanning 23-105 (VATVGISDHA…YEGGWLFKVQ (83 aa)) is the Lipoyl-binding domain. Lysine 64 is modified (N6-lipoyllysine).

Belongs to the GcvH family. As to quaternary structure, the glycine cleavage system is composed of four proteins: P, T, L and H. (R)-lipoate is required as a cofactor.

Its function is as follows. The glycine cleavage system catalyzes the degradation of glycine. The H protein shuttles the methylamine group of glycine from the P protein to the T protein. This is Glycine cleavage system H protein from Alcanivorax borkumensis (strain ATCC 700651 / DSM 11573 / NCIMB 13689 / SK2).